Here is an 832-residue protein sequence, read N- to C-terminus: Sodium/hydrogen exchanger 3 (832 aa).

Positions methionine 1–glycine 29 are cleaved as a signal peptide. The Extracellular segment spans residues alanine 30–histidine 50. A helical transmembrane segment spans residues valine 51 to leucine 73. At serine 74–valine 81 the chain is on the cytoplasmic side. A helical transmembrane segment spans residues proline 82–alanine 101. Residues aspartate 102 to threonine 110 lie on the Extracellular side of the membrane. Residues proline 111–tyrosine 128 form a helical membrane-spanning segment. Over phenylalanine 129 to proline 131 the chain is Cytoplasmic. Residues asparagine 132–serine 167 form a helical membrane-spanning segment. Positions 140 and 141 each coordinate a 1,2-diacyl-sn-glycero-3-phospho-(1D-myo-inositol). The Extracellular segment spans residues glycine 168–phenylalanine 180. A helical membrane pass occupies residues leucine 181 to valine 202. The Cytoplasmic segment spans residues histidine 203–valine 204. The helical transmembrane segment at asparagine 205–leucine 236 threads the bilayer. Residues glycine 237 to glycine 243 lie on the Extracellular side of the membrane. The chain crosses the membrane as a helical span at residues valine 244–threonine 278. Residues lysine 279–histidine 280 lie on the Cytoplasmic side of the membrane. A helical membrane pass occupies residues valine 281 to leucine 303. Residues serine 304–leucine 305 are Extracellular-facing. A helical transmembrane segment spans residues serine 306–valine 322. Residues lysine 323 to glutamine 329 lie on the Cytoplasmic side of the membrane. A helical membrane pass occupies residues serine 330–valine 358. Over aspartate 359–asparagine 366 the chain is Extracellular. The chain crosses the membrane as a helical span at residues threonine 367 to glutamine 388. Topologically, residues threonine 389 to glutamate 401 are cytoplasmic. Methionine 397 contacts a 1,2-diacyl-sn-glycero-3-phospho-(1D-myo-inositol). Residues leucine 402 to leucine 425 form a helical membrane-spanning segment. The Extracellular segment spans residues aspartate 426–glutamate 432. Residues lysine 433–arginine 466 traverse the membrane as a helical segment. Residues serine 467–methionine 832 are Cytoplasmic-facing. Positions 496, 497, and 499 each coordinate a 1,2-diacyl-sn-glycero-3-phospho-(1D-myo-inositol). Phosphoserine is present on residues serine 554 and serine 562. The tract at residues arginine 575–glutamate 589 is interaction with EZR. An interaction with NHERF4 region spans residues serine 590–alanine 667. Residues alanine 591–proline 696 are interaction with AHCYL1. Phosphoserine is present on residues serine 592 and serine 607. Serine 663 carries the post-translational modification Phosphoserine; by SGK1. Positions phenylalanine 664–alanine 706 are disordered. The span at lysine 676–asparagine 692 shows a compositional bias: basic residues. Phosphoserine occurs at positions 719, 813, and 816.

It belongs to the monovalent cation:proton antiporter 1 (CPA1) transporter (TC 2.A.36) family. As to quaternary structure, homodimer. Found in the forms of complex and dynamic macromolecular complexes. Interacts with CHP1; this interaction increases trafficking and activity at the plasma membrane of SLC9A3. Interacts with CHP2 and SHANK2. Interacts with NHERF4 and interaction decreases in response to elevated calcium ion levels. Binds NHERF1 and NHERF2. Interacts with PDZK1 (via C-terminal PDZ domain). Interacts with AHCYL1; interaction is required for SLC9A3 activity. Interacts with EZR; interaction targets SLC9A3 to the apical membrane. Interacts with SNX27 (via PDZ domains); directs SLC9A3 membrane insertion from early endosomes to the plasma membrane. In terms of processing, phosphorylated by PKA, which inhibits activity. Phosphorylation at Ser-663 by SGK1 is associated with increased abundance at the cell membrane and activity. Phosphorylation at Ser-719 by CSNK2A1 regulates SLC9A3 activity through the formation of multiple signaling complexes. In terms of tissue distribution, intestinal and kidney specific. Most abundant in kidney cortex, followed equally by ileum and ascending colon, then kidney medulla and jejunum. Is absent from duodenum and descending colon.

It localises to the apical cell membrane. The protein localises to the cell membrane. It is found in the recycling endosome membrane. The protein resides in the early endosome membrane. It carries out the reaction Na(+)(in) + H(+)(out) = Na(+)(out) + H(+)(in). Its activity is regulated as follows. Seems to switch between active and inactive modes in response to various stimuli. Activated directly or indirectly by membrane phosphatidylinositol (PIs). Regulated by a variety of auxiliary proteins, which facilitate the maturation, cell surface expression and function of the transporter. Inhibited specifically by the drug tenapanor. Its function is as follows. Plasma membrane Na(+)/H(+) antiporter. Exchanges intracellular H(+) ions for extracellular Na(+) in 1:1 stoichiometry, playing a key role in salt and fluid absorption and pH homeostasis. Major apical Na(+)/H(+) exchanger in kidney and intestine playing an important role in renal and intestine Na(+) absorption and blood pressure regulation. This is Sodium/hydrogen exchanger 3 (SLC9A3) from Oryctolagus cuniculus (Rabbit).